A 127-amino-acid polypeptide reads, in one-letter code: Fumarate reductase subunit C (127 aa).

The next 3 membrane-spanning stretches (helical) occupy residues 30 to 50, 58 to 78, and 107 to 127; these read ATVL…GSLV, GWLS…ALLG, and IIVL…LMVV.

This sequence belongs to the FrdC family. As to quaternary structure, part of an enzyme complex containing four subunits: a flavoprotein (FrdA), an iron-sulfur protein (FrdB), and two hydrophobic anchor proteins (FrdC and FrdD).

It localises to the cell inner membrane. Functionally, anchors the catalytic components of the fumarate reductase complex to the cell membrane, binds quinones. This is Fumarate reductase subunit C from Vibrio atlanticus (strain LGP32) (Vibrio splendidus (strain Mel32)).